The sequence spans 410 residues: Transcription factor SPN1 (410 aa).

Residues 1–132 are disordered; that stretch reads MSTADQEQPK…SRQELEEKLD (132 aa). Thr-15 carries the post-translational modification Phosphothreonine. A compositionally biased stretch (polar residues) spans 20 to 52; sequence TASSQKSTINAENENTKQNQSMEPQETSKGTSN. Ser-23 bears the Phosphoserine; by ATM or ATR mark. Position 40 is a phosphoserine (Ser-40). Over residues 53–65 the composition is skewed to basic and acidic residues; sequence DTKDPDNGEKNEE. Ser-85 carries the post-translational modification Phosphoserine. Phosphothreonine is present on Thr-86. Ser-89 carries the phosphoserine modification. Positions 219–296 constitute a TFIIS N-terminal domain; that stretch reads QSVRIWLEPL…AEWTRPIIGA (78 aa). Residues 318 to 346 are disordered; it reads KSVMDSAKNRKKKSKSGEDPTSRGSSVQT.

This sequence belongs to the IWS1 family. Interacts with ABD1, RBP1, SPT5 and SPT6.

Its subcellular location is the nucleus. In terms of biological role, transcription factor involved in RNA polymerase II transcription regulation. May function in both SPT15/TBP post-recruitment and recruitment steps of transcription. This Saccharomyces cerevisiae (strain ATCC 204508 / S288c) (Baker's yeast) protein is Transcription factor SPN1 (SPN1).